We begin with the raw amino-acid sequence, 208 residues long: Nascent polypeptide-associated complex subunit alpha (208 aa).

The span at 1–19 (MSSSRIEELPDDDVPKTTV) shows a compositional bias: basic and acidic residues. 2 disordered regions span residues 1–50 (MSSS…HSRN) and 120–166 (QLAA…VFDA). A compositionally biased stretch (acidic residues) spans 21–34 (DAADSSESEVEGAE). One can recognise an NAC-A/B domain in the interval 48–113 (SRNEKKARKA…AKIEDLNSQA (66 aa)). A compositionally biased stretch (low complexity) spans 120 to 131 (QLAAAEAAGSNE). A compositionally biased stretch (basic and acidic residues) spans 132–154 (HAGHDHASHDHGKGKAVESADKK). Acidic residues predominate over residues 155 to 164 (DEEEDDEEVF). Positions 169–208 (LEAKDIELVMAQASVSRNKAIKALKENDNDIVNSIMALSV) constitute a UBA domain.

It belongs to the NAC-alpha family. As to quaternary structure, part of the nascent polypeptide-associated complex (NAC), consisting of EGD2 and EGD1. NAC associates with ribosomes via EGD1.

It is found in the cytoplasm. The protein resides in the nucleus. Its function is as follows. Component of the nascent polypeptide-associated complex (NAC), a dynamic component of the ribosomal exit tunnel, protecting the emerging polypeptides from interaction with other cytoplasmic proteins to ensure appropriate nascent protein targeting. The NAC complex also promotes mitochondrial protein import by enhancing productive ribosome interactions with the outer mitochondrial membrane and blocks the inappropriate interaction of ribosomes translating non-secretory nascent polypeptides with translocation sites in the membrane of the endoplasmic reticulum. EGD2 may also be involved in transcription regulation. The chain is Nascent polypeptide-associated complex subunit alpha (EGD2) from Ajellomyces capsulatus (strain NAm1 / WU24) (Darling's disease fungus).